The following is a 133-amino-acid chain: Profilin-2 (133 aa).

C13 and C117 are joined by a disulfide. The Involved in PIP2 interaction motif lies at 83–99; sequence AVIRGKKGSGGITIKKT. Residue T113 is modified to Phosphothreonine.

The protein belongs to the profilin family. Occurs in many kinds of cells as a complex with monomeric actin in a 1:1 ratio. Phosphorylated by MAP kinases.

It localises to the cytoplasm. It is found in the cytoskeleton. Its function is as follows. Binds to actin and affects the structure of the cytoskeleton. At high concentrations, profilin prevents the polymerization of actin, whereas it enhances it at low concentrations. In Betula pendula (European white birch), this protein is Profilin-2.